Here is a 3411-residue protein sequence, read N- to C-terminus: Genome polyprotein (3411 aa).

The Cytoplasmic segment spans residues 1-104 (MSGRKAQGKT…LSSRKRRSHD (104 aa)). Residues 38–72 (PGPSRGVQGFISFFSFNILTGKKITAHLKRLWKML) form a hydrophobic; homodimerization of capsid protein C region. Positions 102–121 (SHDVLTVQFLILGMLLMAGG) are cleaved as a propeptide — ER anchor for the capsid protein C, removed in mature form by serine protease NS3. Residues 105–125 (VLTVQFLILGMLLMAGGVTLV) form a helical membrane-spanning segment. Residues 126 to 244 (RKNRWLLLNV…GERQLQKIER (119 aa)) lie on the Extracellular side of the membrane. N-linked (GlcNAc...) asparagine; by host glycosylation is found at N134 and N150. The helical transmembrane segment at 245-265 (WLVRNPFFAVTALAIAYLVGS) threads the bilayer. Over 266 to 270 (NMTQR) the chain is Cytoplasmic. A helical transmembrane segment spans residues 271 to 285 (VVIALLVLAVGPAYS). The Extracellular portion of the chain corresponds to 286-730 (AHCIGITDRD…TVFGSAFQGL (445 aa)). 8 disulfides stabilise this stretch: C288-C315, C345-C401, C345-C406, C359-C390, C377-C401, C377-C406, C467-C568, and C585-C615. Residues 383 to 396 (DRGWGNGCGLFGKG) are fusion peptide. A helical membrane pass occupies residues 731–751 (FGGLSWITKVIMGAVLIWVGI). The Extracellular segment spans residues 752–757 (NTRNMT). A helical transmembrane segment spans residues 758–778 (MSMSMILVGVIMMFLSLGVGA). Over 779 to 1132 (DQGCAINFGK…LVRSWVTAGE (354 aa)) the chain is Extracellular. Intrachain disulfides connect C782/C793, C833/C921, C957/C1002, C1058/C1107, C1069/C1091, and C1090/C1094. N-linked (GlcNAc...) asparagine; by host glycans are attached at residues N908 and N986. A helical transmembrane segment spans residues 1133–1153 (IHAVPFGLVSMMIAMEVVLRK). Topologically, residues 1154–1201 (RQGPKQMLVGGMVLLGAMLVGQVTLLDLLKLTMAVGLHFHEMNNGGDA) are cytoplasmic. Residues 1202-1222 (MYMALIAAFSIRPGLLIGFGL) traverse the membrane as a helical segment. The Lumenal portion of the chain corresponds to 1223–1287 (RTLWSPRERL…ILPLMALLTP (65 aa)). The chain crosses the membrane as a helical span at residues 1288-1308 (VTMAEVRLATMLLCAVVIIGV). The Cytoplasmic segment spans residues 1309–1355 (LHQNSKDTSMQKTIPLVALTLTSYLGLTQPFLGLCAFLATRIFGRRS). A helical transmembrane segment spans residues 1356 to 1376 (IPVNEALAAAGLVGVLAGLAF). Over 1377–1378 (QE) the chain is Lumenal. A helical transmembrane segment spans residues 1379-1399 (MENFLGPIAVGGILMMLVSVA). Residues 1400-1456 (GRVDGLELKKLGEVSWEEEAEISGSSARYDVALSEQGEFKLLSEEKVPWDQVVMTSL) are Cytoplasmic-facing. The tract at residues 1407-1446 (LKKLGEVSWEEEAEISGSSARYDVALSEQGEFKLLSEEKV) is interacts with and activates NS3 protease. Positions 1457 to 1477 (ALVGAAIHPSALLLVLAGWLF) form an intramembrane region, helical. Over 1478-2157 (HVKGARRSGD…RNALSMMPEA (680 aa)) the chain is Cytoplasmic. Residues 1485–1665 (SGDVLWDIPT…EVKEEGKEEL (181 aa)) form the Peptidase S7 domain. Residues H1537, D1561, and S1622 each act as charge relay system; for serine protease NS3 activity in the active site. The Helicase ATP-binding domain maps to 1669–1825 (PTMLKKGMTT…HSNGEIEDVQ (157 aa)). The important for RNA-binding stretch occupies residues 1673–1676 (KKGM). Residue 1682–1689 (YHPGAGKT) coordinates ATP. The short motif at 1773 to 1776 (DEAH) is the DEAH box element. The Helicase C-terminal domain maps to 1820–1997 (EIEDVQTDIP…VRGGMVAPLY (178 aa)). The residue at position 1877 (K1877) is an N6-acetyllysine; by host. Residues 2158 to 2178 (MTIVMLFILAGLLTSGMVIFF) form a helical membrane-spanning segment. The Lumenal segment spans residues 2179-2186 (MSPKGISR). Positions 2187 to 2207 (MSMAMGTMAGCGYLMFLGGAK) form an intramembrane region, helical. Residues 2208-2209 (PT) lie on the Lumenal side of the membrane. The helical transmembrane segment at 2210 to 2230 (HISYIMLIFFVLMVVVIPEPG) threads the bilayer. The Cytoplasmic segment spans residues 2231–2241 (QQRSIQDNQVA). A helical transmembrane segment spans residues 2242-2262 (YLIIGILTLVSVVAANELGML). At 2263-2293 (ERTKEDLFGKKNLIPSSASPWSWPDLDLKPG) the chain is on the lumenal side. Positions 2294–2314 (AAWTVYVGIVTILSPMLHHWI) form an intramembrane region, helical. Over 2315 to 2360 (KVEYGNLSLSGIAQSASVLSFMDKGIPFMKMNISVIILLVSGWNSI) the chain is Lumenal. Residues 2361–2380 (TVMPLLCGIGCAMLHWTLIL) form a helical membrane-spanning segment. Topologically, residues 2381 to 2421 (PGIKAQQSKLPQRRVFHGVAKNPVVDGNPTVDIEEAPEMPA) are cytoplasmic. A helical membrane pass occupies residues 2422-2442 (LYEKKLALYLLLALSLASVAM). The Lumenal segment spans residues 2443–2445 (CRT). A helical membrane pass occupies residues 2446-2466 (PFSLAEGIVLASAALGPLIEG). Residues 2467-3411 (NTSLLWNGPM…DADLQPGELI (945 aa)) lie on the Cytoplasmic side of the membrane. The mRNA cap 0-1 NS5-type MT domain occupies 2507-2771 (GRANGKTLGE…DVILPIGTRS (265 aa)). An S-adenosyl-L-methionine-binding site is contributed by S2562. At S2562 the chain carries Phosphoserine. K2567 acts as the For 2'-O-MTase activity in catalysis. Residues G2592, W2593, T2610, L2611, D2637, and I2638 each contribute to the S-adenosyl-L-methionine site. D2652 (for 2'-O-MTase activity) is an active-site residue. An S-adenosyl-L-methionine-binding site is contributed by I2653. Residues K2688 and E2724 each act as for 2'-O-MTase activity in the active site. Residue Y2726 participates in S-adenosyl-L-methionine binding. A Nuclear localization signal motif is present at residues 2878–2911 (RKIMKVVNRWLFRHLAREKNPRLCTKEEFIAKVR). Positions 2945, 2949, 2954, and 2957 each coordinate Zn(2+). The 153-residue stretch at 3035-3187 (GGFYADDTAG…RPIDDRFGMA (153 aa)) folds into the RdRp catalytic domain. Zn(2+) contacts are provided by H3222, C3238, and C3357.

In the N-terminal section; belongs to the class I-like SAM-binding methyltransferase superfamily. mRNA cap 0-1 NS5-type methyltransferase family. As to quaternary structure, homodimer. Interacts (via N-terminus) with host EXOC1 (via C-terminus); this interaction results in EXOC1 degradation through the proteasome degradation pathway. In terms of assembly, forms heterodimers with envelope protein E in the endoplasmic reticulum and Golgi. Homodimer; in the endoplasmic reticulum and Golgi. Interacts with protein prM. Interacts with non-structural protein 1. As to quaternary structure, homodimer; Homohexamer when secreted. Interacts with envelope protein E. In terms of assembly, interacts (via N-terminus) with serine protease NS3. Forms a heterodimer with serine protease NS3. May form homooligomers. As to quaternary structure, forms a heterodimer with NS2B. Interacts with non-structural protein 2A (via N-terminus). Interacts with NS4B. Interacts with unphosphorylated RNA-directed RNA polymerase NS5; this interaction stimulates RNA-directed RNA polymerase NS5 guanylyltransferase activity. NS3 interacts with host PDCD6IP; this interaction contributes to virion release. In terms of assembly, interacts with serine protease NS3. Homodimer. Interacts with host STAT2; this interaction prevents the establishment of cellular antiviral state. Interacts with serine protease NS3. Interacts with host TRIM23; this interaction leads to NS5 ubiquitination. Post-translationally, specific enzymatic cleavages in vivo yield mature proteins. The nascent capsid protein C contains a C-terminal hydrophobic domain that act as a signal sequence for translocation of prM into the lumen of the ER. Mature capsid protein C is cleaved at a site upstream of this hydrophobic domain by NS3. prM is cleaved in post-Golgi vesicles by a host furin, releasing the mature small envelope protein M, and peptide pr. Non-structural protein 2A-alpha, a C-terminally truncated form of non-structural protein 2A, results from partial cleavage by NS3. Specific enzymatic cleavages in vivo yield mature proteins peptide 2K acts as a signal sequence and is removed from the N-terminus of NS4B by the host signal peptidase in the ER lumen. Signal cleavage at the 2K-4B site requires a prior NS3 protease-mediated cleavage at the 4A-2K site. In terms of processing, cleaved in post-Golgi vesicles by a host furin, releasing the mature small envelope protein M, and peptide pr. This cleavage is incomplete as up to 30% of viral particles still carry uncleaved prM. N-glycosylated. Post-translationally, N-glycosylated. The excreted form is glycosylated and this is required for efficient secretion of the protein from infected cells. In terms of processing, polyubiquitinated; ubiquitination is probably mediated by host TRIM23 and is prerequisite for NS5-STAT2 interaction. NS5 is not ISGylated or sumoylated. Acetylated by host KAT5. Acetylation modulates NS3 RNA-binding and unwinding activities and plays an important positive role for viral replication. Post-translationally, phosphorylated on serines residues. This phosphorylation may trigger NS5 nuclear localization.

The protein localises to the virion. The protein resides in the host nucleus. It is found in the host cytoplasm. It localises to the host perinuclear region. Its subcellular location is the secreted. The protein localises to the virion membrane. The protein resides in the host endoplasmic reticulum membrane. It carries out the reaction Selective hydrolysis of -Xaa-Xaa-|-Yaa- bonds in which each of the Xaa can be either Arg or Lys and Yaa can be either Ser or Ala.. The catalysed reaction is RNA(n) + a ribonucleoside 5'-triphosphate = RNA(n+1) + diphosphate. It catalyses the reaction a ribonucleoside 5'-triphosphate + H2O = a ribonucleoside 5'-diphosphate + phosphate + H(+). The enzyme catalyses ATP + H2O = ADP + phosphate + H(+). It carries out the reaction a 5'-end (5'-triphosphoguanosine)-ribonucleoside in mRNA + S-adenosyl-L-methionine = a 5'-end (N(7)-methyl 5'-triphosphoguanosine)-ribonucleoside in mRNA + S-adenosyl-L-homocysteine. The catalysed reaction is a 5'-end (N(7)-methyl 5'-triphosphoguanosine)-ribonucleoside in mRNA + S-adenosyl-L-methionine = a 5'-end (N(7)-methyl 5'-triphosphoguanosine)-(2'-O-methyl-ribonucleoside) in mRNA + S-adenosyl-L-homocysteine + H(+). In terms of biological role, plays a role in virus budding by binding to the cell membrane and gathering the viral RNA into a nucleocapsid that forms the core of a mature virus particle. During virus entry, may induce genome penetration into the host cytoplasm after hemifusion induced by the surface proteins. Can migrate to the cell nucleus where it modulates host functions. Functionally, inhibits RNA silencing by interfering with host Dicer. Its function is as follows. Prevents premature fusion activity of envelope proteins in trans-Golgi by binding to envelope protein E at pH6.0. After virion release in extracellular space, gets dissociated from E dimers. Acts as a chaperone for envelope protein E during intracellular virion assembly by masking and inactivating envelope protein E fusion peptide. prM is the only viral peptide matured by host furin in the trans-Golgi network probably to avoid catastrophic activation of the viral fusion activity in acidic Golgi compartment prior to virion release. prM-E cleavage is inefficient, and many virions are only partially matured. These uncleaved prM would play a role in immune evasion. In terms of biological role, may play a role in virus budding. Exerts cytotoxic effects by activating a mitochondrial apoptotic pathway through M ectodomain. May display a viroporin activity. Functionally, binds to host cell surface receptor and mediates fusion between viral and cellular membranes. Envelope protein is synthesized in the endoplasmic reticulum in the form of heterodimer with protein prM. They play a role in virion budding in the ER, and the newly formed immature particle is covered with 60 spikes composed of heterodimer between precursor prM and envelope protein E. The virion is transported to the Golgi apparatus where the low pH causes dissociation of PrM-E heterodimers and formation of E homodimers. prM-E cleavage is inefficient, and many virions are only partially matured. These uncleaved prM would play a role in immune evasion. Its function is as follows. Involved in immune evasion, pathogenesis and viral replication. Once cleaved off the polyprotein, is targeted to three destinations: the viral replication cycle, the plasma membrane and the extracellular compartment. Essential for viral replication. Required for formation of the replication complex and recruitment of other non-structural proteins to the ER-derived membrane structures. Excreted as a hexameric lipoparticle that plays a role against host immune response. Antagonizing the complement function. Binds to the host macrophages and dendritic cells. Inhibits signal transduction originating from Toll-like receptor 3 (TLR3). Component of the viral RNA replication complex that functions in virion assembly and antagonizes the host immune response. In terms of biological role, required cofactor for the serine protease function of NS3. May have membrane-destabilizing activity and form viroporins. Functionally, displays three enzymatic activities: serine protease, NTPase and RNA helicase. NS3 serine protease, in association with NS2B, performs its autocleavage and cleaves the polyprotein at dibasic sites in the cytoplasm: C-prM, NS2A-NS2B, NS2B-NS3, NS3-NS4A, NS4A-2K and NS4B-NS5. NS3 RNA helicase binds RNA and unwinds dsRNA in the 3' to 5' direction. Also plays a role in virus assembly. Its function is as follows. Regulates the ATPase activity of the NS3 helicase activity. NS4A allows NS3 helicase to conserve energy during unwinding. Functions as a signal peptide for NS4B and is required for the interferon antagonism activity of the latter. In terms of biological role, induces the formation of ER-derived membrane vesicles where the viral replication takes place. Inhibits interferon (IFN)-induced host STAT1 phosphorylation and nuclear translocation, thereby preventing the establishment of cellular antiviral state by blocking the IFN-alpha/beta pathway. Functionally, replicates the viral (+) and (-) RNA genome, and performs the capping of genomes in the cytoplasm. NS5 methylates viral RNA cap at guanine N-7 and ribose 2'-O positions. Besides its role in RNA genome replication, also prevents the establishment of cellular antiviral state by blocking the interferon-alpha/beta (IFN-alpha/beta) signaling pathway. IFN-I induces binding of NS5 to host IFN-activated transcription factor STAT2, preventing its transcriptional activity. Host TRIM23 is the E3 ligase that interacts with and polyubiquitinates NS5 to promote its binding to STAT2 and trigger IFN-I signaling inhibition. The chain is Genome polyprotein from Yellow fever virus (isolate Ivory Coast/85-82H/1982) (YFV).